Here is a 472-residue protein sequence, read N- to C-terminus: Transcription factor TGAL1 (472 aa).

The interval 136–190 (WGESTIADTSPRTDTSTDPDTDERNQMFEQGQLAAPTASDSSDRSKDKLDHKTLR) is disordered. Residues 143–153 (DTSPRTDTSTD) are compositionally biased toward low complexity. The segment covering 176–187 (SSDRSKDKLDHK) has biased composition (basic and acidic residues). The bZIP domain occupies 185 to 229 (DHKTLRRLAQNREAARKSRLRKKAYIQNLESSRLKLTQIEQELQR). Positions 187 to 207 (KTLRRLAQNREAARKSRLRKK) are basic motif. The tract at residues 213–227 (LESSRLKLTQIEQEL) is leucine-zipper. One can recognise a DOG1 domain in the interval 252-469 (ALAFDMEYAR…RALSSLWLAR (218 aa)).

Belongs to the bZIP family. In terms of assembly, isoforms 1 and 2 interact with NPR2/NH2. Isoform 2 interacts with NPR1/NH1 and NPR3/NH3.

The protein localises to the nucleus. Functionally, transcriptional regulator involved in defense response. In Oryza sativa subsp. japonica (Rice), this protein is Transcription factor TGAL1.